The chain runs to 227 residues: DNA repair protein RecO (227 aa).

It belongs to the RecO family.

Functionally, involved in DNA repair and RecF pathway recombination. This chain is DNA repair protein RecO, found in Pseudomonas putida (strain GB-1).